A 599-amino-acid chain; its full sequence is NADH-quinone oxidoreductase subunit C/D (599 aa).

Polar residues predominate over residues 1 to 15 (MTDLTAQELAQPSWQ). A disordered region spans residues 1 to 21 (MTDLTAQELAQPSWQTRDHQD). Residues 1–189 (MTDLTAQELA…DPFELTKQKE (189 aa)) form an NADH dehydrogenase I subunit C region. Residues 213–599 (DFMFLNLGPN…IDFVMSDVDR (387 aa)) form an NADH dehydrogenase I subunit D region.

It in the N-terminal section; belongs to the complex I 30 kDa subunit family. In the C-terminal section; belongs to the complex I 49 kDa subunit family. As to quaternary structure, NDH-1 is composed of 13 different subunits. Subunits NuoB, CD, E, F, and G constitute the peripheral sector of the complex.

The protein resides in the cell inner membrane. The catalysed reaction is a quinone + NADH + 5 H(+)(in) = a quinol + NAD(+) + 4 H(+)(out). NDH-1 shuttles electrons from NADH, via FMN and iron-sulfur (Fe-S) centers, to quinones in the respiratory chain. The immediate electron acceptor for the enzyme in this species is believed to be ubiquinone. Couples the redox reaction to proton translocation (for every two electrons transferred, four hydrogen ions are translocated across the cytoplasmic membrane), and thus conserves the redox energy in a proton gradient. This Erwinia tasmaniensis (strain DSM 17950 / CFBP 7177 / CIP 109463 / NCPPB 4357 / Et1/99) protein is NADH-quinone oxidoreductase subunit C/D.